Here is a 278-residue protein sequence, read N- to C-terminus: HTH-type transcriptional activator RhaS (278 aa).

The HTH araC/xylS-type domain occupies 174 to 272; it reads NQLMAWLEDH…NWSPRDIRQG (99 aa). 2 DNA-binding regions (H-T-H motif) span residues 191–212 and 239–262; these read EAVAEQFSLSLRTLHRQLKQHT and VTEIAYRCGFGDSNHFSTLFRREF.

In terms of assembly, binds DNA as a dimer.

It localises to the cytoplasm. Activates expression of the rhaBAD and rhaT operons. The sequence is that of HTH-type transcriptional activator RhaS from Salmonella arizonae (strain ATCC BAA-731 / CDC346-86 / RSK2980).